Here is a 430-residue protein sequence, read N- to C-terminus: NADH-quinone oxidoreductase subunit D 1 (430 aa).

Residues 1–36 are disordered; the sequence is MSEAKGVGGIDPRATPGSAGAGERPPMGTVSRAGDG.

This sequence belongs to the complex I 49 kDa subunit family. In terms of assembly, NDH-1 is composed of 14 different subunits. Subunits NuoB, C, D, E, F, and G constitute the peripheral sector of the complex.

The protein localises to the cell inner membrane. It catalyses the reaction a quinone + NADH + 5 H(+)(in) = a quinol + NAD(+) + 4 H(+)(out). NDH-1 shuttles electrons from NADH, via FMN and iron-sulfur (Fe-S) centers, to quinones in the respiratory chain. The immediate electron acceptor for the enzyme in this species is believed to be ubiquinone. Couples the redox reaction to proton translocation (for every two electrons transferred, four hydrogen ions are translocated across the cytoplasmic membrane), and thus conserves the redox energy in a proton gradient. The sequence is that of NADH-quinone oxidoreductase subunit D 1 from Anaeromyxobacter dehalogenans (strain 2CP-C).